Here is a 905-residue protein sequence, read N- to C-terminus: Microtubule-associated protein 10 (905 aa).

Disordered regions lie at residues 30 to 51 (AAAV…SSPR), 199 to 235 (TRTG…KPLG), 329 to 362 (APEE…AHEH), 434 to 458 (SPES…GGCE), 547 to 586 (SSAE…FDEP), 721 to 772 (RSFK…GSPV), and 786 to 855 (KSLE…SSYL). Residues 34 to 43 (EQEEEEEEKE) show a composition bias toward acidic residues. Low complexity predominate over residues 208-227 (SPQTQQERQQLQQPASQPSP). The segment covering 443-453 (CRSEAKKDKRS) has biased composition (basic and acidic residues). A compositionally biased stretch (polar residues) spans 567 to 579 (ASFTENSDTSRQI). The span at 721-736 (RSFKAHDSSSRTENPK) shows a compositional bias: basic and acidic residues. Over residues 737–748 (HSQYTSKSSDTG) the composition is skewed to polar residues. A compositionally biased stretch (low complexity) spans 790 to 801 (EASSISASDLSS). A compositionally biased stretch (polar residues) spans 830-855 (SVKTRSSWKSLEKSQSPQTSQVSSYL).

Interacts (via middle region) with microtubules. In terms of tissue distribution, expressed in different cell lines (at protein level).

Its subcellular location is the cytoplasm. It localises to the cytoskeleton. It is found in the spindle pole. The protein resides in the microtubule organizing center. The protein localises to the centrosome. Its subcellular location is the midbody. In terms of biological role, microtubule-associated protein (MAP) that plays a role in the regulation of cell division; promotes microtubule stability and participates in the organization of the spindle midzone and normal progress of cytokinesis. The chain is Microtubule-associated protein 10 (MAP10) from Homo sapiens (Human).